The sequence spans 528 residues: UDP-glucuronosyltransferase 1A9 (528 aa).

A signal peptide spans 1–23 (MAPVAFPTSFFLCLLLASGLAQA). A glycan (N-linked (GlcNAc...) asparagine) is linked at N69. At K97 the chain carries N6-succinyllysine. N290 and N428 each carry an N-linked (GlcNAc...) asparagine glycan. Residues 486-506 (VIGFLLAIVLTVVFIVFKCCA) form a helical membrane-spanning segment.

It belongs to the UDP-glycosyltransferase family. As to quaternary structure, homodimer. Homooligomer. Interacts with UGT1A1, UGT1A3, UGT1A4, UGT1A6, UGT1A7, UGT1A8 and UGT1A10 to form heterodimers. Highly expressed in liver and at lower levels in stomach and kidney.

It localises to the endoplasmic reticulum membrane. It carries out the reaction glucuronate acceptor + UDP-alpha-D-glucuronate = acceptor beta-D-glucuronoside + UDP + H(+). The enzyme catalyses 2-hydroxy-17beta-estradiol + UDP-alpha-D-glucuronate = 2-hydroxy-17beta-estradiol 3-O-(beta-D-glucuronate) + UDP + H(+). It catalyses the reaction 4-hydroxy-17beta-estradiol + UDP-alpha-D-glucuronate = 17beta-estradiol 4-O-(beta-D-glucuronate) + UDP + H(+). The catalysed reaction is 2-hydroxyestrone + UDP-alpha-D-glucuronate = 2-hydroxyestrone 3-O-(beta-D-glucuronate) + UDP + H(+). It carries out the reaction 4-hydroxyestrone + UDP-alpha-D-glucuronate = estrone 4-O-(beta-D-glucuronate) + UDP + H(+). The enzyme catalyses prunetin + UDP-alpha-D-glucuronate = prunetin-5-O-beta-D-glucuronide + UDP. It catalyses the reaction 8-iso-prostaglandin F2alpha + UDP-alpha-D-glucuronate = 8-iso-prostaglandin F2alpha-glucuronide + UDP + H(+). The catalysed reaction is 5-epi-5-F2t-IsoP + UDP-alpha-D-glucuronate = 5-epi-5-F2t-IsoP-glucuronide + UDP + H(+). It carries out the reaction (5Z,8Z,11Z,14Z)-eicosatetraenoate + UDP-alpha-D-glucuronate = O-[(5Z),(8Z),(11Z),(14Z)-eicosatetraenoyl]-beta-D-glucuronate + UDP. The enzyme catalyses 15-hydroxy-(5Z,8Z,11Z,13E)-eicosatetraenoate + UDP-alpha-D-glucuronate = 15-O-(beta-D-glucuronosyl)-(5Z,8Z,11Z,14Z)-eicosatetraenoate + UDP + H(+). It catalyses the reaction prostaglandin B1 + UDP-alpha-D-glucuronate = 15-O-(beta-D-glucuronosyl)-prostaglandin B1 + UDP + H(+). The catalysed reaction is (E)-ferulate + UDP-alpha-D-glucuronate = (E)-4-O-(beta-D-glucuronosyl)-ferulate + UDP + H(+). It carries out the reaction (E)-ferulate + UDP-alpha-D-glucuronate = (E)-ferulic acid beta-D-glucuronate ester + UDP. The enzyme catalyses candesartan + UDP-alpha-D-glucuronate = candesartan O-beta-D-glucuronoside + UDP. It catalyses the reaction SN-38 + UDP-alpha-D-glucuronate = SN-38 O-beta-D-glucuronide + UDP + H(+). The catalysed reaction is mycophenolate + UDP-alpha-D-glucuronate = mycophenolate 7-O-beta-D-glucuronide + UDP + H(+). Its function is as follows. UDP-glucuronosyltransferase (UGT) that catalyzes phase II biotransformation reactions in which lipophilic substrates are conjugated with glucuronic acid to increase the metabolite's water solubility, thereby facilitating excretion into either the urine or bile. Essential for the elimination and detoxification of drugs, xenobiotics and endogenous compounds. Catalyzes the glucuronidation of endogenous estrogen hormones such as estradiol and estrone. Involved in the glucuronidation of arachidonic acid (AA) and AA-derived eicosanoids including 15-HETE, PGB1 and F2-isoprostanes (8-iso-PGF2alpha and 5-epi-5-F2t-IsoP). Glucuronates the phytochemical ferulic acid efficently at both the phenolic or the carboxylic acid group. Also catalyzes the glucuronidation of the isoflavones genistein, daidzein, glycitein, formononetin, biochanin A and prunetin, which are phytoestrogens with anticancer and cardiovascular properties. Involved in the glucuronidation of the AGTR1 angiotensin receptor antagonist caderastan, a drug which can inhibit the effect of angiotensin II. Involved in the biotransformation of 7-ethyl-10-hydroxycamptothecin (SN-38), the pharmacologically active metabolite of the anticancer drug irinotecan. Also metabolizes mycophenolate, an immunosuppressive agent. The sequence is that of UDP-glucuronosyltransferase 1A9 from Mus musculus (Mouse).